The sequence spans 433 residues: LanC-like protein GCL1 (433 aa).

Positions 1-22 (MSSSVDFVTEQGRCGDDGNGAG) are disordered.

It belongs to the LanC-like protein family.

May play a role in signaling. May be not involved in abscisic acid (ABA) signaling. The sequence is that of LanC-like protein GCL1 (GCL1) from Arabidopsis thaliana (Mouse-ear cress).